The sequence spans 137 residues: uncharacterized protein (137 aa).

The segment at 31–83 is disordered; sequence PASPINDKEKDKAGGRLPSGSEPRARAFCEAGADGEQGDPSPADTIKANQGHI.

This is an uncharacterized protein from Homo sapiens (Human).